The chain runs to 785 residues: Mitochondrial intermediate peptidase (785 aa).

The transit peptide at Met1–Leu26 directs the protein to the mitochondrion. The tract at residues Leu26 to Asp51 is disordered. His566 contributes to the Zn(2+) binding site. Residue Glu567 is part of the active site. The Zn(2+) site is built by His570 and His573.

It belongs to the peptidase M3 family. It depends on Zn(2+) as a cofactor.

It is found in the mitochondrion matrix. The catalysed reaction is Release of an N-terminal octapeptide as second stage of processing of some proteins imported into the mitochondrion.. Functionally, cleaves proteins, imported into the mitochondrion, to their mature size. While most mitochondrial precursor proteins are processed to the mature form in one step by mitochondrial processing peptidase (MPP), the sequential cleavage by MIP of an octapeptide after initial processing by MPP is a required step for a subgroup of nuclear-encoded precursor proteins destined for the matrix or the inner membrane. The polypeptide is Mitochondrial intermediate peptidase (oct1) (Botryotinia fuckeliana (strain B05.10) (Noble rot fungus)).